A 485-amino-acid chain; its full sequence is Glutamate--tRNA ligase (485 aa).

The 'HIGH' region signature appears at Pro11–Asn21. A 'KMSKS' region motif is present at residues Lys255–Arg259. Lys258 contributes to the ATP binding site.

The protein belongs to the class-I aminoacyl-tRNA synthetase family. Glutamate--tRNA ligase type 1 subfamily. Monomer.

Its subcellular location is the cytoplasm. It carries out the reaction tRNA(Glu) + L-glutamate + ATP = L-glutamyl-tRNA(Glu) + AMP + diphosphate. Functionally, catalyzes the attachment of glutamate to tRNA(Glu) in a two-step reaction: glutamate is first activated by ATP to form Glu-AMP and then transferred to the acceptor end of tRNA(Glu). This chain is Glutamate--tRNA ligase, found in Streptococcus gordonii (strain Challis / ATCC 35105 / BCRC 15272 / CH1 / DL1 / V288).